A 248-amino-acid polypeptide reads, in one-letter code: FCS-Like Zinc finger 14 (248 aa).

Polar residues predominate over residues 85 to 94 (VCRSEPNQPG). Residues 85–108 (VCRSEPNQPGRSDPVQFMSHGGST) form a disordered region. Residues 181 to 224 (GFLNSCYLCRKKLHGQDIFIYRGEKAFCSTECRSSHIANDERKE) form an FLZ-type zinc finger.

This sequence belongs to the FLZ family. Interacts with KIN10 and KIN11 via its FLZ-type zinc finger domain. Interacts with KINB1, KINB2 and KINB3 via its N-terminal part.

Its subcellular location is the cytoplasm. It is found in the nucleus. In terms of biological role, may act as an adapter to facilitate the interaction of SnRK1 complex with effector proteins, conferring tissue- and stimulus-type specific differences in the SnRK1 regulation pathway. The polypeptide is FCS-Like Zinc finger 14 (Arabidopsis thaliana (Mouse-ear cress)).